Here is a 292-residue protein sequence, read N- to C-terminus: tRNA pseudouridine synthase B (292 aa).

Aspartate 40 acts as the Nucleophile in catalysis.

It belongs to the pseudouridine synthase TruB family. Type 1 subfamily.

It catalyses the reaction uridine(55) in tRNA = pseudouridine(55) in tRNA. Responsible for synthesis of pseudouridine from uracil-55 in the psi GC loop of transfer RNAs. The protein is tRNA pseudouridine synthase B of Mycoplasma mycoides subsp. mycoides SC (strain CCUG 32753 / NCTC 10114 / PG1).